The following is a 330-amino-acid chain: D-lactate dehydrogenase (330 aa).

NAD(+) is bound by residues 156-157 (RI), D176, 206-207 (VP), 233-235 (AAR), and D259. R235 is an active-site residue. Residue E264 is part of the active site. H296 (proton donor) is an active-site residue.

This sequence belongs to the D-isomer specific 2-hydroxyacid dehydrogenase family.

The catalysed reaction is (R)-lactate + NAD(+) = pyruvate + NADH + H(+). In Staphylococcus aureus (strain MSSA476), this protein is D-lactate dehydrogenase (ldhD).